The primary structure comprises 141 residues: Large ribosomal subunit protein bL17 (141 aa).

This sequence belongs to the bacterial ribosomal protein bL17 family. Part of the 50S ribosomal subunit. Contacts protein L32.

The sequence is that of Large ribosomal subunit protein bL17 from Allorhizobium ampelinum (strain ATCC BAA-846 / DSM 112012 / S4) (Agrobacterium vitis (strain S4)).